The chain runs to 135 residues: T-cell receptor gamma chain V region 5/10-13 (135 aa).

The N-terminal stretch at 1-18 is a signal peptide; sequence MLLLRWPTFCCLWVFGLG. The v segment stretch occupies residues 19–114; it reads QLEQTELSVT…DEATYYCAVC (96 aa). The j segment stretch occupies residues 115–135; it reads RSGTSWVKIFAKGTKLVVIPP.

This is T-cell receptor gamma chain V region 5/10-13 (Tcrg-V1) from Mus musculus (Mouse).